A 383-amino-acid chain; its full sequence is Meiotic recombination protein SPO11-2 (383 aa).

Residues 24–167 (LLPHEARARI…LGIMASSRGL (144 aa)) form the Topo IIA-type catalytic domain. The active-site O-(5'-phospho-DNA)-tyrosine intermediate is the Tyr124. Mg(2+)-binding residues include Glu217 and Asp270.

This sequence belongs to the TOP6A family. Heterotetramer of 2 SPO11 (SPO11-1 and/or SPO11-2) and 2 MTOPVIB chains. Interacts with MTOPVIB. May form a heterodimer with SPO11-1. Interacts with PRD1. Does not interact with TOP6B. The cofactor is Mg(2+). Very low expression in flowers and shoots.

Its subcellular location is the nucleus. It carries out the reaction ATP-dependent breakage, passage and rejoining of double-stranded DNA.. Its function is as follows. Component of a topoisomerase 6 complex specifically required for meiotic recombination. Together with MTOPVIB, mediates DNA cleavage that forms the double-strand breaks (DSB) that initiate meiotic recombination. The complex promotes relaxation of negative and positive supercoiled DNA and DNA decatenation through cleavage and ligation cycles. The protein is Meiotic recombination protein SPO11-2 (SPO11-2) of Arabidopsis thaliana (Mouse-ear cress).